We begin with the raw amino-acid sequence, 417 residues long: Multifunctional CCA protein (417 aa).

2 residues coordinate ATP: G8 and R11. CTP is bound by residues G8 and R11. Mg(2+) contacts are provided by D21 and D23. R91, R137, and R140 together coordinate ATP. CTP-binding residues include R91, R137, and R140. The 102-residue stretch at 225–326 folds into the HD domain; the sequence is SGIHTLMTLQ…LNVLKKTDAF (102 aa).

It belongs to the tRNA nucleotidyltransferase/poly(A) polymerase family. Bacterial CCA-adding enzyme type 1 subfamily. As to quaternary structure, monomer. Can also form homodimers and oligomers. Mg(2+) serves as cofactor. The cofactor is Ni(2+).

The enzyme catalyses a tRNA precursor + 2 CTP + ATP = a tRNA with a 3' CCA end + 3 diphosphate. It carries out the reaction a tRNA with a 3' CCA end + 2 CTP + ATP = a tRNA with a 3' CCACCA end + 3 diphosphate. In terms of biological role, catalyzes the addition and repair of the essential 3'-terminal CCA sequence in tRNAs without using a nucleic acid template. Adds these three nucleotides in the order of C, C, and A to the tRNA nucleotide-73, using CTP and ATP as substrates and producing inorganic pyrophosphate. tRNA 3'-terminal CCA addition is required both for tRNA processing and repair. Also involved in tRNA surveillance by mediating tandem CCA addition to generate a CCACCA at the 3' terminus of unstable tRNAs. While stable tRNAs receive only 3'-terminal CCA, unstable tRNAs are marked with CCACCA and rapidly degraded. The sequence is that of Multifunctional CCA protein from Neisseria meningitidis serogroup C / serotype 2a (strain ATCC 700532 / DSM 15464 / FAM18).